Here is a 1058-residue protein sequence, read N- to C-terminus: Ubiquitin-like modifier-activating enzyme 1 (1058 aa).

The interval 1–46 is disordered; it reads MSSSPLSKKRRVSGPDPKPGSNCSSAQSVLSEVSSVPTNGMAKNGS. Ser2 carries the post-translational modification N-acetylserine. Phosphoserine is present on residues Ser4, Ser13, Ser21, Ser24, and Ser46. Residues 24-36 are compositionally biased toward low complexity; it reads SSAQSVLSEVSSV. Tyr55 is modified (phosphotyrosine). A run of 2 repeats spans residues 63-199 and 459-611. Residues 63 to 611 form a 2 approximate repeats region; sequence GHEAMKMLQT…GTKGNVQVVI (549 aa). ATP is bound by residues Ala478, Asp504, Arg515, Lys528, and 576-577; that span reads DN. Residue Lys528 is modified to N6-succinyllysine. The active-site Glycyl thioester intermediate is Cys632. An N6-acetyllysine modification is found at Lys671. Thr800 is modified (phosphothreonine). Phosphoserine occurs at positions 810, 816, 820, and 835. Lys980 carries the post-translational modification N6-acetyllysine.

The protein belongs to the ubiquitin-activating E1 family. In terms of assembly, monomer. Interacts with GAN (via BTB domain). In terms of processing, ISGylated.

Its subcellular location is the cytoplasm. The protein localises to the mitochondrion. It localises to the nucleus. The catalysed reaction is ATP + ubiquitin + [E1 ubiquitin-activating enzyme]-L-cysteine = AMP + diphosphate + S-ubiquitinyl-[E1 ubiquitin-activating enzyme]-L-cysteine.. It participates in protein modification; protein ubiquitination. In terms of biological role, catalyzes the first step in ubiquitin conjugation to mark cellular proteins for degradation through the ubiquitin-proteasome system. Activates ubiquitin by first adenylating its C-terminal glycine residue with ATP, and thereafter linking this residue to the side chain of a cysteine residue in E1, yielding a ubiquitin-E1 thioester and free AMP. Essential for the formation of radiation-induced foci, timely DNA repair and for response to replication stress. Promotes the recruitment of TP53BP1 and BRCA1 at DNA damage sites. The chain is Ubiquitin-like modifier-activating enzyme 1 from Rattus norvegicus (Rat).